Here is a 355-residue protein sequence, read N- to C-terminus: Methyltransferase FUS9 (355 aa).

Residues Tyr18, Asn63, Asp86, Ser123, and Phe124 each contribute to the S-adenosyl-L-homocysteine site. Phe231 serves as a coordination point for Mg(2+).

It belongs to the methyltransferase superfamily. Type-7 methyltransferase family. Mg(2+) is required as a cofactor.

It functions in the pathway mycotoxin biosynthesis. Functionally, methyltransferase; part of the gene cluster that mediates the biosynthesis of the mycotoxin fusarin C. Within the cluster, FUS1, FUS2, FUS8 and FUS9 are sufficient for fusarin production. The roles of the other FUS members are yet undetermined. The fusarin C synthetase FUS1 is responsible for the condensation of one acetyl-coenzyme A (CoA) unit with six malonyl-CoA units and the amide linkage of the arising heptaketide and homoserine, subsequently releasing the first intermediate, prefusarin, as an alcohol with an open ring structure. The cytochrome P450 monooxygenase FUS8 participates in multiple oxidation processes at carbon C-20 and is able to use the FUS1 product as substrate, resulting in formation of 20-hydroxy-prefusarin. This reaction seems to be essential before the 2-pyrrolidone ring closure can be catalyzed by FUS2, generating 20-hydroxy-fusarin. FUS8 is able to further oxidizes carbon C-20 after ring closure, resulting in the formation of carboxy-fusarin C. As the last step, FUS9 methylates the hydroxyl group at C-21 to generate fusarin C. Fusarin C can then rearrange to epi-fusarin C, the (z)-isomers, and fusarin A and fusarin D. The chain is Methyltransferase FUS9 from Gibberella moniliformis (strain M3125 / FGSC 7600) (Maize ear and stalk rot fungus).